Here is a 769-residue protein sequence, read N- to C-terminus: Metal transporter CNNM4 (769 aa).

Topologically, residues 1–175 (MAASAGCYYG…RLRVLEEEKP (175 aa)) are extracellular. N-linked (GlcNAc...) asparagine glycosylation is found at Asn99 and Asn115. The CNNM transmembrane domain maps to 175 to 355 (PLLPIWLQAC…EPYSGIVREE (181 aa)). A helical transmembrane segment spans residues 176-196 (LLPIWLQACIIAVLLTLSGIF). At 197–237 (SGLNLGLMALDPMELRVVQRCGTEKEKRYASKIEPVRRKGN) the chain is on the cytoplasmic side. The segment at residues 238–258 (YLLCSLLLGNVLVNTTLTALL) is an intramembrane region (helical). Over 259-261 (DEL) the chain is Cytoplasmic. The helical transmembrane segment at 262–282 (IGSGLAAVLASTTGIVVLGEI) threads the bilayer. Residues 283 to 292 (VPQALCSRHG) are Extracellular-facing. A helical membrane pass occupies residues 293–313 (LAVGANTLWLTRIFMLLTFPV). Topologically, residues 314 to 769 (AYPVSRLLDC…SQHSLQHNAV (456 aa)) are cytoplasmic. CBS domains are found at residues 374–435 (MTKV…CTPL) and 442–508 (YSHP…ILDE). Residues 717–769 (LMSSRLDSSPQSPEGGTRKPDSTLSERSEVLEDETTSLLNQRNSQHSLQHNAV) are disordered. The segment covering 721–730 (RLDSSPQSPE) has biased composition (polar residues). Residues 732–746 (GTRKPDSTLSERSEV) show a composition bias toward basic and acidic residues. The segment covering 752–769 (TSLLNQRNSQHSLQHNAV) has biased composition (polar residues).

Belongs to the ACDP family.

It localises to the cell membrane. Functionally, probable metal transporter. The chain is Metal transporter CNNM4 (cnnm4) from Xenopus tropicalis (Western clawed frog).